We begin with the raw amino-acid sequence, 410 residues long: Ribosomal RNA large subunit methyltransferase G (410 aa).

It belongs to the methyltransferase superfamily. RlmG family.

It localises to the cytoplasm. It catalyses the reaction guanosine(1835) in 23S rRNA + S-adenosyl-L-methionine = N(2)-methylguanosine(1835) in 23S rRNA + S-adenosyl-L-homocysteine + H(+). In terms of biological role, specifically methylates the guanine in position 1835 (m2G1835) of 23S rRNA. This Alteromonas mediterranea (strain DSM 17117 / CIP 110805 / LMG 28347 / Deep ecotype) protein is Ribosomal RNA large subunit methyltransferase G.